Here is a 285-residue protein sequence, read N- to C-terminus: Ribosomal protein L11 methyltransferase (285 aa).

Thr131, Gly154, Asp176, and Asn223 together coordinate S-adenosyl-L-methionine.

The protein belongs to the methyltransferase superfamily. PrmA family.

The protein localises to the cytoplasm. It catalyses the reaction L-lysyl-[protein] + 3 S-adenosyl-L-methionine = N(6),N(6),N(6)-trimethyl-L-lysyl-[protein] + 3 S-adenosyl-L-homocysteine + 3 H(+). In terms of biological role, methylates ribosomal protein L11. The sequence is that of Ribosomal protein L11 methyltransferase from Brucella melitensis biotype 2 (strain ATCC 23457).